Consider the following 506-residue polypeptide: GPI mannosyltransferase 3 (506 aa).

Asn115 is a glycosylation site (N-linked (GlcNAc...) asparagine). 6 consecutive transmembrane segments (helical) span residues 180–200 (AFAC…LLFW), 229–249 (YGRL…NIIA), 257–277 (FVFP…SSLY), 285–305 (YLSQ…LLTM), 330–350 (FVYP…SSFS), and 358–378 (FFFL…RFHQ). Asn395 carries an N-linked (GlcNAc...) asparagine glycan.

This sequence belongs to the glycosyltransferase 22 family. PIGB subfamily.

It is found in the endoplasmic reticulum membrane. It participates in glycolipid biosynthesis; glycosylphosphatidylinositol-anchor biosynthesis. Its function is as follows. Mannosyltransferase involved in glycosylphosphatidylinositol-anchor biosynthesis. Transfers the third mannose to Man2-GlcN-acyl-PI during GPI precursor assembly. The polypeptide is GPI mannosyltransferase 3 (gpi10) (Schizosaccharomyces pombe (strain 972 / ATCC 24843) (Fission yeast)).